The sequence spans 386 residues: Succinate--CoA ligase [ADP-forming] subunit beta (386 aa).

An ATP-grasp domain is found at 9-244; it reads KEILRKYGVP…HDEEDPLETR (236 aa). ATP-binding positions include lysine 46, 53-55, glutamate 99, cysteine 102, and glutamate 107; that span reads GRG. The Mg(2+) site is built by asparagine 199 and aspartate 213. Substrate-binding positions include asparagine 264 and 321-323; that span reads GIM.

It belongs to the succinate/malate CoA ligase beta subunit family. Heterotetramer of two alpha and two beta subunits. Requires Mg(2+) as cofactor.

It catalyses the reaction succinate + ATP + CoA = succinyl-CoA + ADP + phosphate. It carries out the reaction GTP + succinate + CoA = succinyl-CoA + GDP + phosphate. Its pathway is carbohydrate metabolism; tricarboxylic acid cycle; succinate from succinyl-CoA (ligase route): step 1/1. Functionally, succinyl-CoA synthetase functions in the citric acid cycle (TCA), coupling the hydrolysis of succinyl-CoA to the synthesis of either ATP or GTP and thus represents the only step of substrate-level phosphorylation in the TCA. The beta subunit provides nucleotide specificity of the enzyme and binds the substrate succinate, while the binding sites for coenzyme A and phosphate are found in the alpha subunit. This is Succinate--CoA ligase [ADP-forming] subunit beta from Rickettsia typhi (strain ATCC VR-144 / Wilmington).